The chain runs to 651 residues: Probable potassium transport system protein Kup (651 aa).

12 consecutive transmembrane segments (helical) span residues 41 to 61 (LVLGALGVVYGDIGTSPIYAF), 82 to 102 (VVSLIFWALTLVVTVKYVLFV), 130 to 150 (LILGVGICGAALFFGDAVITP), 163 to 183 (IVAPNLTPFVVPATVVILVTL), 194 to 214 (VAIVFGPIMALWFVALGASGL), 235 to 255 (FLTVSPAVAFVTVGAVFLAMT), 276 to 296 (WLWIVFPCLLLNYFGQAAFIL), 309 to 329 (MIPSFALWPMVLLATAATVIA), 366 to 386 (IYIPRVNLLLGLAVVILVLGF), 395 to 415 (AYGIAVTGNMLVTTVLLYIVM), 426 to 446 (ALPIILGFLVIDMLFFSANII), and 450 to 470 (EGGWASIGIATVLVLIMWTWV).

It belongs to the HAK/KUP transporter (TC 2.A.72) family.

It localises to the cell inner membrane. It carries out the reaction K(+)(in) + H(+)(in) = K(+)(out) + H(+)(out). In terms of biological role, transport of potassium into the cell. Likely operates as a K(+):H(+) symporter. The polypeptide is Probable potassium transport system protein Kup (Brucella suis (strain ATCC 23445 / NCTC 10510)).